The chain runs to 257 residues: S-methyl-5'-thioadenosine phosphorylase (257 aa).

Phosphate is bound by residues S10 and 50-51 (RH). A disulfide bridge links C130 with C195. Substrate is bound at residue M180. T181 lines the phosphate pocket. 204 to 206 (DYD) is a binding site for substrate. A disulfide bridge connects residues C246 and C248.

The protein belongs to the PNP/MTAP phosphorylase family. MTAP subfamily. As to quaternary structure, homohexamer. Dimer of a homotrimer.

It catalyses the reaction S-methyl-5'-thioadenosine + phosphate = 5-(methylsulfanyl)-alpha-D-ribose 1-phosphate + adenine. It participates in amino-acid biosynthesis; L-methionine biosynthesis via salvage pathway; S-methyl-5-thio-alpha-D-ribose 1-phosphate from S-methyl-5'-thioadenosine (phosphorylase route): step 1/1. Functionally, catalyzes the reversible phosphorylation of S-methyl-5'-thioadenosine (MTA) to adenine and 5-methylthioribose-1-phosphate. Involved in the breakdown of MTA, a major by-product of polyamine biosynthesis. Responsible for the first step in the methionine salvage pathway after MTA has been generated from S-adenosylmethionine. Has broad substrate specificity with 6-aminopurine nucleosides as preferred substrates. The protein is S-methyl-5'-thioadenosine phosphorylase of Pyrococcus furiosus (strain ATCC 43587 / DSM 3638 / JCM 8422 / Vc1).